The sequence spans 106 residues: Large ribosomal subunit protein bL21 (106 aa).

This sequence belongs to the bacterial ribosomal protein bL21 family. As to quaternary structure, part of the 50S ribosomal subunit. Contacts protein L20.

This protein binds to 23S rRNA in the presence of protein L20. The protein is Large ribosomal subunit protein bL21 of Xylella fastidiosa (strain Temecula1 / ATCC 700964).